The following is a 354-amino-acid chain: Probable RNA methyltransferase AZOSEA28700 (354 aa).

Catalysis depends on glutamate 88, which acts as the Proton acceptor. Positions 91-317 (LLPRDGLCVS…TKLRHSAGQD (227 aa)) constitute a Radical SAM core domain. Residues cysteine 98 and cysteine 322 are joined by a disulfide bond. Residues cysteine 105, cysteine 109, and cysteine 112 each coordinate [4Fe-4S] cluster. Residues 150 to 151 (GE), serine 180, 203 to 205 (SLH), and asparagine 279 each bind S-adenosyl-L-methionine. The active-site S-methylcysteine intermediate is the cysteine 322.

This sequence belongs to the radical SAM superfamily. RlmN family. It depends on [4Fe-4S] cluster as a cofactor.

The protein localises to the cytoplasm. The protein is Probable RNA methyltransferase AZOSEA28700 of Aromatoleum aromaticum (strain DSM 19018 / LMG 30748 / EbN1) (Azoarcus sp. (strain EbN1)).